Reading from the N-terminus, the 274-residue chain is Penicillin-insensitive murein endopeptidase (274 aa).

A signal peptide spans 1–19 (MKKTAIALLAWFVSSASLA). Intrachain disulfides connect Cys-44–Cys-265, Cys-187–Cys-235, and Cys-216–Cys-223. The Zn(2+) site is built by His-110, His-113, Asp-120, Asp-147, His-150, and His-211. The interval 225–274 (DQPLPPPGDGCGAELQSWFEPPKPGTTKPEKKTPPPLPPSCQALLDEHVL) is disordered.

It belongs to the peptidase M74 family. Dimer. Zn(2+) is required as a cofactor.

The protein localises to the periplasm. Functionally, murein endopeptidase that cleaves the D-alanyl-meso-2,6-diamino-pimelyl amide bond that connects peptidoglycan strands. Likely plays a role in the removal of murein from the sacculus. This chain is Penicillin-insensitive murein endopeptidase, found in Salmonella paratyphi A (strain AKU_12601).